Here is a 308-residue protein sequence, read N- to C-terminus: Methionyl-tRNA formyltransferase (308 aa).

110-113 (SLLP) is a (6S)-5,6,7,8-tetrahydrofolate binding site.

This sequence belongs to the Fmt family.

It catalyses the reaction L-methionyl-tRNA(fMet) + (6R)-10-formyltetrahydrofolate = N-formyl-L-methionyl-tRNA(fMet) + (6S)-5,6,7,8-tetrahydrofolate + H(+). Its function is as follows. Attaches a formyl group to the free amino group of methionyl-tRNA(fMet). The formyl group appears to play a dual role in the initiator identity of N-formylmethionyl-tRNA by promoting its recognition by IF2 and preventing the misappropriation of this tRNA by the elongation apparatus. This Neisseria gonorrhoeae (strain NCCP11945) protein is Methionyl-tRNA formyltransferase.